The primary structure comprises 59 residues: Sec-independent protein translocase protein TatA (59 aa).

The helical transmembrane segment at 1 to 21 threads the bilayer; sequence MFSNIGFPGLILILVAVLILF.

Belongs to the TatA/E family. As to quaternary structure, forms a complex with TatC.

The protein resides in the cell membrane. Part of the twin-arginine translocation (Tat) system that transports large folded proteins containing a characteristic twin-arginine motif in their signal peptide across membranes. TatA could form the protein-conducting channel of the Tat system. The sequence is that of Sec-independent protein translocase protein TatA from Bacillus mycoides (strain KBAB4) (Bacillus weihenstephanensis).